A 71-amino-acid polypeptide reads, in one-letter code: Small ribosomal subunit protein bS21 (71 aa).

This sequence belongs to the bacterial ribosomal protein bS21 family.

The protein is Small ribosomal subunit protein bS21 of Shewanella sediminis (strain HAW-EB3).